We begin with the raw amino-acid sequence, 258 residues long: Dihydroorotate dehydrogenase B (NAD(+)), electron transfer subunit (258 aa).

One can recognise an FAD-binding FR-type domain in the interval 1-101 (MKKAYLTVVS…LGPLGNGYDP (101 aa)). FAD is bound by residues 52 to 55 (RPIS), 69 to 71 (IYR), and 76 to 77 (GT). Cys220, Cys225, Cys228, and Cys243 together coordinate [2Fe-2S] cluster.

It belongs to the PyrK family. As to quaternary structure, heterotetramer of 2 PyrK and 2 PyrD type B subunits. [2Fe-2S] cluster serves as cofactor. FAD is required as a cofactor.

The protein operates within pyrimidine metabolism; UMP biosynthesis via de novo pathway; orotate from (S)-dihydroorotate (NAD(+) route): step 1/1. Responsible for channeling the electrons from the oxidation of dihydroorotate from the FMN redox center in the PyrD type B subunit to the ultimate electron acceptor NAD(+). This Bacillus pumilus (strain SAFR-032) protein is Dihydroorotate dehydrogenase B (NAD(+)), electron transfer subunit.